A 700-amino-acid polypeptide reads, in one-letter code: Protein claret segregational (700 aa).

Residues Ser94 and Ser96 each carry the phosphoserine modification. A disordered region spans residues 141–185; that stretch reads APSSITATAVKRPPVTRPAPRAAGGAAAKKPAGTGAAASSGAAAA. The segment covering 149 to 185 has biased composition (low complexity); sequence AVKRPPVTRPAPRAAGGAAAKKPAGTGAAASSGAAAA. The stretch at 196 to 346 forms a coiled coil; the sequence is KARFHDLLEK…ELHNTVMDLR (151 aa). A Kinesin motor domain is found at 348-670; that stretch reads NIRVFCRIRP…LRFAASVNSC (323 aa). 434-441 provides a ligand contact to ATP; sequence GQTGSGKT. The interval 664–668 is required for minus-end directionality; it reads AASVN. The interval 681 to 700 is disordered; that stretch reads LNNSVANSSTQSNNSGSFDK.

Belongs to the TRAFAC class myosin-kinesin ATPase superfamily. Kinesin family. NCD subfamily.

It is found in the cytoplasm. The protein localises to the cytoskeleton. It carries out the reaction ATP + H2O = ADP + phosphate + H(+). Functionally, minus-end-directed microtubule-based motor protein. Has ATPase activity. Required for normal chromosomal segregation in meiosis in females, and in early mitotic divisions of the embryo. This Drosophila melanogaster (Fruit fly) protein is Protein claret segregational (ncd).